The chain runs to 206 residues: Small ribosomal subunit protein uS4A (206 aa).

In terms of domain architecture, S4 RNA-binding spans Met98 to Pro164.

The protein belongs to the universal ribosomal protein uS4 family. As to quaternary structure, part of the 30S ribosomal subunit. Contacts protein S5. The interaction surface between S4 and S5 is involved in control of translational fidelity.

In terms of biological role, one of the primary rRNA binding proteins, it binds directly to 16S rRNA where it nucleates assembly of the body of the 30S subunit. Functionally, with S5 and S12 plays an important role in translational accuracy. In Clostridium botulinum (strain ATCC 19397 / Type A), this protein is Small ribosomal subunit protein uS4A.